Here is a 497-residue protein sequence, read N- to C-terminus: Cytosol aminopeptidase (497 aa).

Residues Lys-267 and Asp-272 each coordinate Mn(2+). Lys-279 is a catalytic residue. Mn(2+) is bound by residues Asp-290, Asp-349, and Glu-351. The active site involves Arg-353.

The protein belongs to the peptidase M17 family. Mn(2+) is required as a cofactor.

Its subcellular location is the cytoplasm. It carries out the reaction Release of an N-terminal amino acid, Xaa-|-Yaa-, in which Xaa is preferably Leu, but may be other amino acids including Pro although not Arg or Lys, and Yaa may be Pro. Amino acid amides and methyl esters are also readily hydrolyzed, but rates on arylamides are exceedingly low.. The enzyme catalyses Release of an N-terminal amino acid, preferentially leucine, but not glutamic or aspartic acids.. Its function is as follows. Presumably involved in the processing and regular turnover of intracellular proteins. Catalyzes the removal of unsubstituted N-terminal amino acids from various peptides. The sequence is that of Cytosol aminopeptidase (pepA) from Pseudomonas putida (Arthrobacter siderocapsulatus).